Consider the following 659-residue polypeptide: Sodium/nucleoside cotransporter 2 (659 aa).

A compositionally biased stretch (basic and acidic residues) spans 1–10 (MAKSEGRKSA). A disordered region spans residues 1 to 22 (MAKSEGRKSASQDTSENGMENP). Serine 46 carries the phosphoserine modification. 14 helical membrane-spanning segments follow: residues 81–101 (ILLG…CILN), 105–124 (ALAL…CHFL), 149–167 (KRVF…LALD), 173–193 (EQLI…ACSK), 201–221 (RTVF…IRTE), 234–254 (IQIF…DTLV), 261–281 (QSLP…YLGL), 296–315 (TMGT…FVGM), 337–356 (VMTG…FISF), 363–382 (LISA…KLVY), 424–444 (VAAN…TLSW), 455–475 (TFQV…GVQW), 530–550 (ATFS…LGGL), and 568–588 (ALFT…ILYV).

It belongs to the concentrative nucleoside transporter (CNT) (TC 2.A.41) family. Expressed in liver (in bile canalicular membrane vesicles (CMV) but not in sinusoidal vesicles), jejunum, spleen and heart. Also expressed in brain and skeletal muscle. Not expressed in kidney, muscle and lung.

Its subcellular location is the membrane. The protein resides in the apicolateral cell membrane. It catalyses the reaction adenosine(out) + Na(+)(out) = adenosine(in) + Na(+)(in). It carries out the reaction inosine(out) + Na(+)(out) = inosine(in) + Na(+)(in). The catalysed reaction is guanosine(out) + Na(+)(out) = guanosine(in) + Na(+)(in). The enzyme catalyses uridine(out) + Na(+)(out) = uridine(in) + Na(+)(in). Inhibited by formycin B, partially inhibited by purine analog ara-A. Its function is as follows. Sodium-dependent and purine-selective. Exhibits the transport characteristics of the nucleoside transport system cif or N1 subtype (N1/cif) (selective for purine nucleosides and uridine). Accepts purine, analogs of purine nucleosides and uridine, and exhibits high affinity for adenosine. May contribute to regulate the transport of organic compounds in testes across the blood-testis-barrier. The chain is Sodium/nucleoside cotransporter 2 (Slc28a2) from Rattus norvegicus (Rat).